Here is a 419-residue protein sequence, read N- to C-terminus: CinA-like protein (419 aa).

The protein belongs to the CinA family.

This Picosynechococcus sp. (strain ATCC 27264 / PCC 7002 / PR-6) (Agmenellum quadruplicatum) protein is CinA-like protein.